A 161-amino-acid polypeptide reads, in one-letter code: Ribosome maturation factor RimP (161 aa).

The protein belongs to the RimP family.

The protein resides in the cytoplasm. Its function is as follows. Required for maturation of 30S ribosomal subunits. In Myxococcus xanthus (strain DK1622), this protein is Ribosome maturation factor RimP.